The sequence spans 2115 residues: MTTTSRVVLFGDQTVDPSPLIKQLCRHSTHSLTLQTFLQKTYFAVRQELAICEISDRANFPSFDSILALAETYSQSNESNEAVSTVLLCIAQLGLLLSREYNDNVINDSSCYSTTYLVGLCTGMLPAAALAFASSTTQLLELAPEVVRISVRLGLEASRRSAQIEKSHESWATLVPGIPLQEQRDILHRFHDVYPIPASKRAYISAESDSTTTISGPPSTLASLFSFSESLRNTRKISLPITAAFHAPHLGSSDTDKIIGSLSKGNEYHLRRDAVIISTSTGDQITGRSLGEALQQVVWDILREPLRWSTVTHAIAAKFRDQDAVLISAGPVRAANSLRREMTNAGVKIVDSYEMQPLQVSQSRNTSGDIAIVGVAGRLPGGETLEEIWENLEKGKDLHKEIPKDRFDVKTHCDPSGKIKNTTLTPYGCFLDRPGFFDARLFNMSPREAAQTDPAQRLLLLTTYEALEMSGYTPNGSPSSASDRIGTFFGQTLDDYREANASQNIDMYYVTGGIRAFGPGRLNYHFKWEGPSYCVDAACSSSALSVQMAMSSLRARECDTAVAGGTNILTGVDMFSGLSRGSFLSPTGSCKTFDDEADGYCRGEGVGSVVLKRLEDAIAEGDNIQAVIKSAATNHSAHAISITHPHAGTQQKLIRQVLREADVEADEIDYVEMHGTGTQAGDATEFTSVTKVLSDRTKDNPLHIGAVKANFGHAEAAAGTNSLIKILMMMRKNKIPPHVGIKGRINHKFPPLDKVNVSIDRALVAFKAHAKGDGKRRVLLNNFNATGGNTSLVLEDPPETVTEGEDPRTAWVVAVSAKTSNSFTQNQQRLLNYVESNPETQLQDLSYTTTARRMHHDTYRKAYAVESMDQLVRSMRKDLSSPSEPTAITGSSPSIFAFTGQGAQYLGMGRQLFETNTSFRQNILDFDRICVRQGLPSFKWLVTSSTSDESVPSPSESQLAMVSIAVALVSLWQSWGIVPSAVIGHSLGEYAALCVAGVLSVSDTLYLVGKRAEMMEKKCIANSHAMLAVQSGSELIQQIIHAEKISTCELACSNGPSNTVVSGTGKDINSLAEKLDDMGVKKTLLKLPYAFHSAQMDPILEDIRAIASNVEFLKPTVPIASTLLGSLVRDQGVITAEYLSRQTRQPVKFQEALYSLRSEGIAGDEALWIEVGAHPLCHSMVRSTLGLSPTKALPTLRRDEDCWSTISKSISNAYNSGAKFMWTEYHRDFRGALKLLELPSYAFDLKNYWIQHEGDWSLRKGEKMIASSTPTVPQQTFSTTCLQKVESETFTQDSASVAFSSRLAEPSLNTAVRGHLVNNVGLCPSSVYADVAFTAAWYIASRMAPSELVPAMDLSTMEVFRPLIVDKETSQILHVSASRKPGEQVVKVQISSQDMNGSKDHANCTVMYGDGQQWIDEWQLNAYLVQSRVDQLIQPVKPASVHRLLKEMIYRQFQTVVTYSKEYHNIDEIFMDCDLNETAANIRFQPTAGNGNFIYSPYWIDTVAHLAGFVLNASTKTPADTVFISHGWQSFRIAAPLSDEKTYRGYVRMQPIGTRGVMAGDVYIFDGDRIVVLCKGIKFQKMKRNILQSLLSTGHEETPPARPVPSKRTVQGSVTETKAAITPSIKAASGGFSNILETIASEVGIEVSEITDDGKISDLGVDSLLTISILGRLRSETGLDLPSSLFIAYPTVAQLRNFFLDKVATSQSVFDDEESEMSSSTAGSTPGSSTSHGNQNTTVTTPAEPDVVAILMSIIAREVGIDATEIQPSTPFADLGVDSLLTISILDSFKSEMRMSLAATFFHENPTFTDVQKALGVPSMPQKSLKMPSEFPEMNMGPSNQSVRSKSSILQGRPASNRPALFLLPDGAGSMFSYISLPALPSGVPVYGLDSPFHNSPKDYTVSFEEVASIFIKEIRAIQPRGPYMLGGWSLGGILAYEASRQLIAQGETITNLIMIDSPCPGTLPPLPSPTLNLLEKAGIFDGLSASSGPITERTRLHFLGSVRALENYTVKPIPADRSPGKVTVIWAQDGVLEGREDVGGEEWMADSSGGDANADMEKAKQWLTGKRTSFGPSGWDKLTGAEVQCHVVGGNHFSIMFPPKIEAVAVAMATGLPA.

The segment at 8–246 is N-terminal acylcarrier protein transacylase (SAT) domain (SAT); that stretch reads VLFGDQTVDP…ISLPITAAFH (239 aa). The 430-residue stretch at 367 to 796 folds into the Ketosynthase family 3 (KS3) domain; the sequence is SGDIAIVGVA…GGNTSLVLED (430 aa). Residues Cys-539, His-674, and His-713 each act as for beta-ketoacyl synthase activity in the active site. The tract at residues 895-1218 is malonyl-CoA:ACP transacylase (MAT) domain; it reads IFAFTGQGAQ…SISNAYNSGA (324 aa). A product template (PT) domain region spans residues 1279 to 1592; sequence TTCLQKVESE…KRNILQSLLS (314 aa). The interval 1282–1413 is N-terminal hotdog fold; that stretch reads LQKVESETFT…CTVMYGDGQQ (132 aa). Positions 1282-1588 constitute a PKS/mFAS DH domain; that stretch reads LQKVESETFT…FQKMKRNILQ (307 aa). The active-site Proton acceptor; for dehydratase activity is His-1315. Positions 1441–1588 are C-terminal hotdog fold; the sequence is VHRLLKEMIY…FQKMKRNILQ (148 aa). The active-site Proton donor; for dehydratase activity is the Asp-1501. Positions 1594–1613 are disordered; that stretch reads GHEETPPARPVPSKRTVQGS. One can recognise a Carrier 1 domain in the interval 1626-1703; that stretch reads KAASGGFSNI…QLRNFFLDKV (78 aa). O-(pantetheine 4'-phosphoryl)serine is present on Ser-1663. The segment at 1710-1742 is disordered; sequence FDDEESEMSSSTAGSTPGSSTSHGNQNTTVTTP. Residues 1718–1733 are compositionally biased toward low complexity; the sequence is SSSTAGSTPGSSTSHG. The Carrier 2 domain maps to 1742–1819; that stretch reads PAEPDVVAIL…DVQKALGVPS (78 aa). Residue Ser-1779 is modified to O-(pantetheine 4'-phosphoryl)serine. The segment at 1861–2097 is thioesterase (TE) domain; it reads LFLLPDGAGS…VVGGNHFSIM (237 aa).

Pantetheine 4'-phosphate serves as cofactor.

It catalyses the reaction 6 malonyl-CoA + 2 acetyl-CoA + 5 H(+) = o-orsellinate depside + 6 CO2 + 8 CoA + H2O. In terms of biological role, non-reducing polyketide synthase; part of a gene cluster that mediates the biosynthesis of a yet unidentified depside/depsidone compound. The first step in the pathway is performed by the PKS PFUR17_0229 that condenses 2 acetyl-CoA starter units with 6 malonyl-CoA units to produce lecanoric acid (LA), also known as orsellinate depside. The biosynthesis occurs via the formation of 2 orsellinate intermediates fused together by the C-terminal thioesterase (TE) domain that finally releases lecanoric acid. In addition to the PKS gene, the PFUR17 gene cluster contains closely linked genes encoding a cytochrome P-450 and a laccase (phenol oxidase), directly upstream and downstream respectively, so it is likely that lecanoric acid is an intermediate in a longer biosynthetic pathway. The sequence is that of Non-reducing polyketide synthase PFUR17_0229 from Pseudevernia furfuracea (Tree moss).